The chain runs to 176 residues: Acireductone dioxygenase (176 aa).

Positions 1 to 21 (MKAYWYDNKPGDQREPHDSGR) are disordered. Basic and acidic residues predominate over residues 9 to 20 (KPGDQREPHDSG). Residues His-81, His-83, Glu-87, and His-126 each coordinate Fe(2+). Residues His-81, His-83, Glu-87, and His-126 each contribute to the Ni(2+) site.

This sequence belongs to the acireductone dioxygenase (ARD) family. It depends on Fe(2+) as a cofactor. Requires Ni(2+) as cofactor.

It is found in the cytoplasm. Its subcellular location is the nucleus. The enzyme catalyses 1,2-dihydroxy-5-(methylsulfanyl)pent-1-en-3-one + O2 = 4-methylsulfanyl-2-oxobutanoate + formate + 2 H(+). The catalysed reaction is 1,2-dihydroxy-5-(methylsulfanyl)pent-1-en-3-one + O2 = 3-(methylsulfanyl)propanoate + CO + formate + 2 H(+). Its pathway is amino-acid biosynthesis; L-methionine biosynthesis via salvage pathway; L-methionine from S-methyl-5-thio-alpha-D-ribose 1-phosphate: step 5/6. Functionally, catalyzes 2 different reactions between oxygen and the acireductone 1,2-dihydroxy-3-keto-5-methylthiopentene (DHK-MTPene) depending upon the metal bound in the active site. Fe-containing acireductone dioxygenase (Fe-ARD) produces formate and 2-keto-4-methylthiobutyrate (KMTB), the alpha-ketoacid precursor of methionine in the methionine recycle pathway. Ni-containing acireductone dioxygenase (Ni-ARD) produces methylthiopropionate, carbon monoxide and formate, and does not lie on the methionine recycle pathway. This is Acireductone dioxygenase (adi1) from Aspergillus fumigatus (strain ATCC MYA-4609 / CBS 101355 / FGSC A1100 / Af293) (Neosartorya fumigata).